The sequence spans 457 residues: MDIIIKNGTIVTADGISRADLGIKDGKITQIGGALGPAERTIDAAGRYVFPGGIDVHTHVETVSFNTQSADTFATATVAAACGGTTTIVDFCQQDRGHSLAEAVAKWDGMAGGKSAIDYGYHIIVLDPTDSVIEELEVLPDLGITSFKVFMAYRGMNMIDDVTLLKTLDKAVKTGSLVMVHAENGDAADYLRDKFVAEGKTAPIYHALSRPPRVEAEATARALALAEIVNAPIYIVHVTCEESLEEVMRAKSRGVRALAETCTHYLYLTKEDLERPDFEGAKYVFTPPARAKKDHDVLWNALRNGVFETVSSDHCSWLFKGHKDRGRNDFRAIPNGAPGVEERLMMVYQGVNEGRISLTQFVELVATRPAKVFGMFPQKGTIAVGSDADIVLWDPEAEMVIEQTAMHNAMDYSSYEGHKVKGVPKTVLLRGKVIVDEGSYVGEPTDGKFLKRRKYKQ.

The Zn(2+) site is built by His57 and His59. Ser69 carries the phosphoserine modification. A Zn(2+)-binding site is contributed by Lys148. Residue Lys148 is modified to N6-carboxylysine. Tyr153 serves as a coordination point for substrate. The Zn(2+) site is built by His181 and His237. Thr286 is a substrate binding site. Asp313 contacts Zn(2+). Asn335 is a substrate binding site.

The protein belongs to the metallo-dependent hydrolases superfamily. Hydantoinase/dihydropyrimidinase family. In terms of assembly, homodimer and homotetramer. Zn(2+) serves as cofactor. Carboxylation allows a single lysine to coordinate two zinc ions.

Catalyzes the stereospecific hydrolysis of the cyclic amide bond of D-hydantoin derivatives. The chain is D-hydantoinase (hyuA) from Ralstonia pickettii (Burkholderia pickettii).